The following is a 539-amino-acid chain: Chaperonin GroEL (539 aa).

ATP-binding positions include 29 to 32 (TLGP), 86 to 90 (DGTTT), Gly413, and Asp494.

This sequence belongs to the chaperonin (HSP60) family. Forms a cylinder of 14 subunits composed of two heptameric rings stacked back-to-back. Interacts with the co-chaperonin GroES.

The protein localises to the cytoplasm. It catalyses the reaction ATP + H2O + a folded polypeptide = ADP + phosphate + an unfolded polypeptide.. In terms of biological role, together with its co-chaperonin GroES, plays an essential role in assisting protein folding. The GroEL-GroES system forms a nano-cage that allows encapsulation of the non-native substrate proteins and provides a physical environment optimized to promote and accelerate protein folding. The protein is Chaperonin GroEL of Finegoldia magna (strain ATCC 29328 / DSM 20472 / WAL 2508) (Peptostreptococcus magnus).